A 1621-amino-acid polypeptide reads, in one-letter code: ABC transporter A family member 2 (1621 aa).

Transmembrane regions (helical) follow at residues 30–50 (ILFP…VMAF), 234–254 (SVFI…DLVI), 276–296 (ISWM…ISII), 309–329 (GVVI…AFIL), 338–358 (FCGL…IFVA), 365–385 (GAKL…IFAM), and 405–425 (NQVI…VWYL). The ABC transporter 1 domain occupies 484–717 (ISIRNLRKEY…FGCGYLLTCS (234 aa)). 520-527 (GPNGSGKS) serves as a coordination point for ATP. The next 7 membrane-spanning stretches (helical) occupy residues 856–876 (FFLT…MYKA), 1033–1053 (IVYF…SFAG), 1083–1103 (VWDY…LAGI), 1111–1131 (FGLM…LSYL), 1142–1162 (ATGA…IISL), 1183–1203 (VDIV…LFLV), and 1227–1247 (GSPM…IMIL). The ABC transporter 2 domain maps to 1293–1528 (LQFRNLHKLF…FGAGYTFDVK (236 aa)). Position 1331–1338 (1331–1338 (GLNGAGKT)) interacts with ATP.

The protein belongs to the ABC transporter superfamily. ABCA family.

It is found in the membrane. This Dictyostelium discoideum (Social amoeba) protein is ABC transporter A family member 2 (abcA2).